Consider the following 338-residue polypeptide: Holliday junction branch migration complex subunit RuvB (338 aa).

The interval 1–181 (MEERILTQNF…FGVINRLDYY (181 aa)) is large ATPase domain (RuvB-L). Residues leucine 20, arginine 21, glycine 62, lysine 65, threonine 66, threonine 67, 128 to 130 (EDF), arginine 171, tyrosine 181, and arginine 218 contribute to the ATP site. A Mg(2+)-binding site is contributed by threonine 66. A small ATPAse domain (RuvB-S) region spans residues 182–252 (SVEELKEIIK…TANIALNMLG (71 aa)). Positions 255–338 (EMGLEEIDRK…YVEQRRIEDV (84 aa)) are head domain (RuvB-H). Residues arginine 310 and arginine 315 each contribute to the DNA site.

It belongs to the RuvB family. As to quaternary structure, homohexamer. Forms an RuvA(8)-RuvB(12)-Holliday junction (HJ) complex. HJ DNA is sandwiched between 2 RuvA tetramers; dsDNA enters through RuvA and exits via RuvB. An RuvB hexamer assembles on each DNA strand where it exits the tetramer. Each RuvB hexamer is contacted by two RuvA subunits (via domain III) on 2 adjacent RuvB subunits; this complex drives branch migration. In the full resolvosome a probable DNA-RuvA(4)-RuvB(12)-RuvC(2) complex forms which resolves the HJ.

The protein resides in the cytoplasm. The enzyme catalyses ATP + H2O = ADP + phosphate + H(+). Functionally, the RuvA-RuvB-RuvC complex processes Holliday junction (HJ) DNA during genetic recombination and DNA repair, while the RuvA-RuvB complex plays an important role in the rescue of blocked DNA replication forks via replication fork reversal (RFR). RuvA specifically binds to HJ cruciform DNA, conferring on it an open structure. The RuvB hexamer acts as an ATP-dependent pump, pulling dsDNA into and through the RuvAB complex. RuvB forms 2 homohexamers on either side of HJ DNA bound by 1 or 2 RuvA tetramers; 4 subunits per hexamer contact DNA at a time. Coordinated motions by a converter formed by DNA-disengaged RuvB subunits stimulates ATP hydrolysis and nucleotide exchange. Immobilization of the converter enables RuvB to convert the ATP-contained energy into a lever motion, pulling 2 nucleotides of DNA out of the RuvA tetramer per ATP hydrolyzed, thus driving DNA branch migration. The RuvB motors rotate together with the DNA substrate, which together with the progressing nucleotide cycle form the mechanistic basis for DNA recombination by continuous HJ branch migration. Branch migration allows RuvC to scan DNA until it finds its consensus sequence, where it cleaves and resolves cruciform DNA. The polypeptide is Holliday junction branch migration complex subunit RuvB (Caldanaerobacter subterraneus subsp. tengcongensis (strain DSM 15242 / JCM 11007 / NBRC 100824 / MB4) (Thermoanaerobacter tengcongensis)).